Here is a 134-residue protein sequence, read N- to C-terminus: Small ribosomal subunit protein uS8c (134 aa).

The protein belongs to the universal ribosomal protein uS8 family. As to quaternary structure, part of the 30S ribosomal subunit.

It is found in the plastid. The protein resides in the chloroplast. Its function is as follows. One of the primary rRNA binding proteins, it binds directly to 16S rRNA central domain where it helps coordinate assembly of the platform of the 30S subunit. The polypeptide is Small ribosomal subunit protein uS8c (rps8) (Arabidopsis thaliana (Mouse-ear cress)).